A 399-amino-acid polypeptide reads, in one-letter code: Rho GTPase-activating protein gacC (399 aa).

A compositionally biased stretch (basic and acidic residues) spans 1–13; that stretch reads MESKDQNVYRKGS. Residues 1–80 are disordered; sequence MESKDQNVYR…SSSTSTTPVK (80 aa). Positions 14 to 31 are enriched in polar residues; that stretch reads DNFSKGSNTFFGNLKSIS. Over residues 61 to 79 the composition is skewed to low complexity; the sequence is SVDSSSSNPSSSSTSTTPV. The 190-residue stretch at 186 to 375 folds into the Rho-GAP domain; it reads VELEESFKTA…NLISFFQQIF (190 aa).

The protein resides in the cytoplasm. Rho GTPase-activating protein involved in the signal transduction pathway. This Dictyostelium discoideum (Social amoeba) protein is Rho GTPase-activating protein gacC (gacC).